Consider the following 408-residue polypeptide: MWAFSELPMPLLINLIVSLLGFVATVTLIPAFRGHFIAARLCGQDLNKTSRQQIPESQGVISGAVFLIILFCFIPFPFLNCFVKEQCKAFPHHEFVALIGALLAICCMIFLGFADDVLNLRWRHKLLLPTAASLPLLMVYFTNFGNTTIVVPKPFRPILGLHLDLGILYYVYMGLLAVFCTNAINILAGINGLEAGQSLVISASIIVFNLVELEGDCRDDHVFSLYFMIPFFFTTLGLLYHNWYPSRVFVGDTFCYFAGMTFAVVGILGHFSKTMLLFFMPQVFNFLYSLPQLLHIIPCPRHRIPRLNIKTGKLEMSYSKFKTKSLSFLGTFILKVAESLQLVTVHQSETEDGEFTECNNMTLINLLLKVLGPIHERNLTLLLLLLQILGSAITFSIRYQLVRLFYDV.

Residues 1-10 (MWAFSELPMP) lie on the Lumenal side of the membrane. Residues 11–38 (LLINLIVSLLGFVATVTLIPAFRGHFIA) form a helical membrane-spanning segment. The Cytoplasmic segment spans residues 39–58 (ARLCGQDLNKTSRQQIPESQ). UDP-N-acetyl-alpha-D-glucosamine contacts are provided by residues 44-46 (QDL) and Glu-56. Leu-46 contributes to the tunicamycin A1 binding site. The chain crosses the membrane as a helical span at residues 59 to 78 (GVISGAVFLIILFCFIPFPF). Residues 79–91 (LNCFVKEQCKAFP) lie on the Lumenal side of the membrane. A helical transmembrane segment spans residues 92-118 (HHEFVALIGALLAICCMIFLGFADDVL). Residue Asn-119 coordinates tunicamycin A1. At 119–121 (NLR) the chain is on the cytoplasmic side. A helical membrane pass occupies residues 122–143 (WRHKLLLPTAASLPLLMVYFTN). Lys-125 serves as a coordination point for dolichyl phosphate. At 144–166 (FGNTTIVVPKPFRPILGLHLDLG) the chain is on the lumenal side. The N-linked (GlcNAc...) asparagine glycan is linked to Asn-146. A helical transmembrane segment spans residues 167–186 (ILYYVYMGLLAVFCTNAINI). Position 178-186 (178-186 (VFCTNAINI)) interacts with dolichyl phosphate. Asn-185 contacts tunicamycin A1. Asn-185 is a binding site for Mg(2+). The Cytoplasmic segment spans residues 187–192 (LAGING). Asn-191 is a binding site for UDP-N-acetyl-alpha-D-glucosamine. Residues 193-213 (LEAGQSLVISASIIVFNLVEL) traverse the membrane as a helical segment. Residues 214–218 (EGDCR) are Lumenal-facing. The helical transmembrane segment at 219–242 (DDHVFSLYFMIPFFFTTLGLLYHN) threads the bilayer. Over 243–250 (WYPSRVFV) the chain is Cytoplasmic. The helical transmembrane segment at 251 to 269 (GDTFCYFAGMTFAVVGILG) threads the bilayer. Position 252 (Asp-252) interacts with tunicamycin A1. Asp-252 is a binding site for Mg(2+). Residues 270–271 (HF) are Lumenal-facing. A helical transmembrane segment spans residues 272–293 (SKTMLLFFMPQVFNFLYSLPQL). The Cytoplasmic portion of the chain corresponds to 294–375 (LHIIPCPRHR…LLLKVLGPIH (82 aa)). 301–303 (RHR) contributes to the UDP-N-acetyl-alpha-D-glucosamine binding site. Arg-303 contacts tunicamycin A1. Residues 376–400 (ERNLTLLLLLLQILGSAITFSIRYQ) traverse the membrane as a helical segment. Residues 401-408 (LVRLFYDV) are Lumenal-facing.

It belongs to the glycosyltransferase 4 family. Homodimer. Requires Mg(2+) as cofactor.

It localises to the endoplasmic reticulum membrane. It catalyses the reaction a di-trans,poly-cis-dolichyl phosphate + UDP-N-acetyl-alpha-D-glucosamine = an N-acetyl-alpha-D-glucosaminyl-diphospho-di-trans,poly-cis-dolichol + UMP. The protein operates within protein modification; protein glycosylation. With respect to regulation, inhibited by natural nucleoside antibiotic tunicamycin, which acts as a structural analog and competitor of UDP-GlcNAc. Activated by mannosylphosphoryldolichol and phospholipids such as phosphatidylglycerol and phosphatidylcholine. UDP-N-acetylglucosamine--dolichyl-phosphate N-acetylglucosaminephosphotransferase that operates in the biosynthetic pathway of dolichol-linked oligosaccharides, the glycan precursors employed in protein asparagine (N)-glycosylation. The assembly of dolichol-linked oligosaccharides begins on the cytosolic side of the endoplasmic reticulum membrane and finishes in its lumen. The sequential addition of sugars to dolichol pyrophosphate produces dolichol-linked oligosaccharides containing fourteen sugars, including two GlcNAcs, nine mannoses and three glucoses. Once assembled, the oligosaccharide is transferred from the lipid to nascent proteins by oligosaccharyltransferases. Catalyzes the initial step of dolichol-linked oligosaccharide biosynthesis, transfering GlcNAc-1-P from cytosolic UDP-GlcNAc onto the carrier lipid dolichyl phosphate (P-dolichol), yielding GlcNAc-P-P-dolichol embedded in the cytoplasmic leaflet of the endoplasmic reticulum membrane. This chain is UDP-N-acetylglucosamine--dolichyl-phosphate N-acetylglucosaminephosphotransferase, found in Homo sapiens (Human).